We begin with the raw amino-acid sequence, 196 residues long: HTH-type transcriptional regulator BetI (196 aa).

One can recognise an HTH tetR-type domain in the interval 8–68 (EVRRAQLIDA…ATMRHILRDL (61 aa)). Residues 31 to 50 (TLASVAQRANISTGIVSHYF) constitute a DNA-binding region (H-T-H motif).

Its pathway is amine and polyamine biosynthesis; betaine biosynthesis via choline pathway [regulation]. Repressor involved in the biosynthesis of the osmoprotectant glycine betaine. It represses transcription of the choline transporter BetT and the genes of BetAB involved in the synthesis of glycine betaine. The protein is HTH-type transcriptional regulator BetI of Paraburkholderia phymatum (strain DSM 17167 / CIP 108236 / LMG 21445 / STM815) (Burkholderia phymatum).